The chain runs to 276 residues: NAD-capped RNA hydrolase NudC (276 aa).

Arg-82 contributes to the substrate binding site. Cys-112 and Cys-115 together coordinate Zn(2+). Glu-125 provides a ligand contact to substrate. Cys-130 and Cys-133 together coordinate Zn(2+). Substrate is bound at residue Tyr-138. The 124-residue stretch at 139–262 folds into the Nudix hydrolase domain; it reads PRISPSMIVL…SIARYLIDLY (124 aa). A divalent metal cation is bound by residues Ala-172, Glu-188, and Glu-192. A Nudix box motif is present at residues 173–194; sequence GFAEPGESAEDCLIREVREEVS. Residue 206–213 coordinates substrate; the sequence is QCWPFPHS. A divalent metal cation is bound at residue Glu-233. Residue Ala-255 participates in substrate binding.

The protein belongs to the Nudix hydrolase family. NudC subfamily. In terms of assembly, homodimer. The cofactor is Mg(2+). Mn(2+) is required as a cofactor. Requires Zn(2+) as cofactor.

The catalysed reaction is a 5'-end NAD(+)-phospho-ribonucleoside in mRNA + H2O = a 5'-end phospho-adenosine-phospho-ribonucleoside in mRNA + beta-nicotinamide D-ribonucleotide + 2 H(+). The enzyme catalyses NAD(+) + H2O = beta-nicotinamide D-ribonucleotide + AMP + 2 H(+). It carries out the reaction NADH + H2O = reduced beta-nicotinamide D-ribonucleotide + AMP + 2 H(+). In terms of biological role, mRNA decapping enzyme that specifically removes the nicotinamide adenine dinucleotide (NAD) cap from a subset of mRNAs by hydrolyzing the diphosphate linkage to produce nicotinamide mononucleotide (NMN) and 5' monophosphate mRNA. The NAD-cap is present at the 5'-end of some mRNAs and stabilizes RNA against 5'-processing. Has preference for mRNAs with a 5'-end purine. Catalyzes the hydrolysis of a broad range of dinucleotide pyrophosphates. The chain is NAD-capped RNA hydrolase NudC from Pseudomonas fluorescens (strain ATCC BAA-477 / NRRL B-23932 / Pf-5).